A 286-amino-acid polypeptide reads, in one-letter code: Polyamine aminopropyltransferase (286 aa).

The 234-residue stretch at 5 to 238 (KIWHEKLHRH…GTMMFSWGTD (234 aa)) folds into the PABS domain. Spermidine contacts are provided by H64 and D88. S-methyl-5'-thioadenosine contacts are provided by residues E108 and 140–141 (NG). Catalysis depends on D158, which acts as the Proton acceptor. 158 to 161 (DSTD) contacts spermidine.

Belongs to the spermidine/spermine synthase family. Homodimer or homotetramer.

Its subcellular location is the cytoplasm. The catalysed reaction is S-adenosyl 3-(methylsulfanyl)propylamine + putrescine = S-methyl-5'-thioadenosine + spermidine + H(+). It functions in the pathway amine and polyamine biosynthesis; spermidine biosynthesis; spermidine from putrescine: step 1/1. In terms of biological role, catalyzes the irreversible transfer of a propylamine group from the amino donor S-adenosylmethioninamine (decarboxy-AdoMet) to putrescine (1,4-diaminobutane) to yield spermidine. The protein is Polyamine aminopropyltransferase of Buchnera aphidicola subsp. Schizaphis graminum (strain Sg).